Here is a 360-residue protein sequence, read N- to C-terminus: GTP 3',8-cyclase (360 aa).

Residues 1 to 31 form a disordered region; the sequence is MTVTALGVPTVRGRSEGSAVASDAPGDGPLL. The Radical SAM core domain occupies 33 to 251; that stretch reads RFGRSATDLR…LQPHFRLRPD (219 aa). Position 42 (arginine 42) interacts with GTP. Cysteine 49 and cysteine 53 together coordinate [4Fe-4S] cluster. An S-adenosyl-L-methionine-binding site is contributed by tyrosine 55. Residue cysteine 56 coordinates [4Fe-4S] cluster. Arginine 93 contacts GTP. Glycine 97 contributes to the S-adenosyl-L-methionine binding site. A GTP-binding site is contributed by threonine 124. Residue serine 148 coordinates S-adenosyl-L-methionine. Lysine 185 lines the GTP pocket. Methionine 219 provides a ligand contact to S-adenosyl-L-methionine. 2 residues coordinate [4Fe-4S] cluster: cysteine 287 and cysteine 290. 292–294 is a binding site for GTP; it reads RTR. Cysteine 304 is a binding site for [4Fe-4S] cluster.

Belongs to the radical SAM superfamily. MoaA family. As to quaternary structure, monomer and homodimer. The cofactor is [4Fe-4S] cluster.

It catalyses the reaction GTP + AH2 + S-adenosyl-L-methionine = (8S)-3',8-cyclo-7,8-dihydroguanosine 5'-triphosphate + 5'-deoxyadenosine + L-methionine + A + H(+). It functions in the pathway cofactor biosynthesis; molybdopterin biosynthesis. Functionally, catalyzes the cyclization of GTP to (8S)-3',8-cyclo-7,8-dihydroguanosine 5'-triphosphate. The chain is GTP 3',8-cyclase from Mycobacterium ulcerans (strain Agy99).